A 309-amino-acid polypeptide reads, in one-letter code: Ankyrin repeat and SOCS box protein 12 (309 aa).

ANK repeat units follow at residues 63 to 92 (VPGTPLRLAASYGHLSCLQVLLAHGADVDS), 96 to 125 (KAQTPLFTAVSHGHLDCVRVLLEAGASPGG), 129 to 158 (NNCSPVLTAARDGAVAILQELLDHGAEANV), 171 to 200 (SCSGPLYLAAVYGHLDCFRLLLLHGADPDY), and 213 to 243 (RPRTLLEICLHHNCEPEYIQLLIDFGANIYL). Residues 268 to 308 (PRSLLSQVRLVVRRALCQAGQPQAINQLDIPPMLISYLKHQ) form the SOCS box domain.

It belongs to the ankyrin SOCS box (ASB) family. As to quaternary structure, interacts with CUL5 and RNF7.

It functions in the pathway protein modification; protein ubiquitination. Its function is as follows. Probable substrate-recognition component of a SCF-like ECS (Elongin-Cullin-SOCS-box protein) E3 ubiquitin-protein ligase complex which mediates the ubiquitination and subsequent proteasomal degradation of target proteins. This Homo sapiens (Human) protein is Ankyrin repeat and SOCS box protein 12 (ASB12).